A 71-amino-acid polypeptide reads, in one-letter code: Omega-conotoxin-like CnVIIE (71 aa).

A signal peptide spans 1–22; that stretch reads MKLTCVVIVAVLLLTACQLITA. The propeptide occupies 23–45; sequence DDSRGTQKHRALRSDTKLSMSTR. Intrachain disulfides connect Cys46–Cys61, Cys53–Cys65, and Cys60–Cys70. Pro52 is subject to 4-hydroxyproline; partial. Cysteine amide is present on Cys70.

This sequence belongs to the conotoxin M superfamily. As to expression, expressed by the venom duct.

The protein localises to the secreted. Functionally, omega-conotoxins act at presynaptic membranes, they bind and block voltage-gated calcium channels (Cav). The polypeptide is Omega-conotoxin-like CnVIIE (Conus consors (Singed cone)).